The following is a 1366-amino-acid chain: Protein strawberry notch homolog 2 (1366 aa).

4 disordered regions span residues 1 to 24, 174 to 217, 614 to 640, and 1324 to 1366; these read MLAV…GSLL, QEQS…KQHP, STKR…KAPR, and HAGP…QAPL. Residues 15–24 show a composition bias toward pro residues; it reads HEPPPAGSLL. Over residues 182-194 the composition is skewed to acidic residues; it reads PEEEDEAEEEEAE. Residues 614–637 show a composition bias toward basic residues; it reads STKRKRDRGAGSKRKRRPRGRGAK. Gly residues predominate over residues 1333–1347; sequence LGEGAGAGGAAGGGP.

This sequence belongs to the SBNO family. As to quaternary structure, interacts with TAL1; this interaction inhibits TAL1 occupancy of the DCSTAMP promoter, leading to the activation of the DCSTAMP promoter by the transcription factor MITF. Detected in macrophages. IL10 regulates expression in a STAT3-dependent way.

Its function is as follows. Acts as a transcriptional coregulator, that can have both coactivator and corepressor functions. Inhibits the DCSTAMP-repressive activity of TAL1, hence enhancing the access of the transcription factor MITF to the DC-STAMP promoter in osteoclast. Plays a role in bone homeostasis; required as a positive regulator in TNFSF11//RANKL-mediated osteoclast fusion via a DCSTAMP-dependent pathway. May also be required in the regulation of osteoblast differentiation. Involved in the transcriptional corepression of NF-kappaB in macrophages. Plays a role as a regulator in the pro-inflammatory cascade. The protein is Protein strawberry notch homolog 2 (SBNO2) of Homo sapiens (Human).